A 474-amino-acid polypeptide reads, in one-letter code: MSQLDVLIVDDEESIRNLIAANLKDEGFNPKVAANSTQALKILSEKPVSAVVLDIWLQGSEIDGLGILEIIKKRYPLMPVIIISGHGTIETAVNAIKMGAYDYIEKPFNNDKLVILLTRACEVTKLKRENIDLKSKVIDKTELVGECSVTLKYKMAIAKAATSSCRIMIHGKVGSGKELAARLIHKQSKRVNNPFIIFSPTCMTTEKINQELFGELEKQANNKRPTILEFANNGTLYIDEVSNIPIPIQVKLLKFLKDQTITKPCGKNIKIDIKIITGTSKNIQDEVNNGKFLEDLYYRLNVSSLKVPSLYERKEDIPLLVKYFVKQLSKFSGLKERSFADETIAALQSYEWPGNIRQLRNVVEWTLIMNPLTTGNNEIIKPYMIPSEILANSANLTKLEDSFDMLSMPLREAREVFERQYLSAQMSRFNNNISKTSSFVGMERSALHRKLKLLSLHIPPTNRINDEEYEEANA.

The region spanning D5 to C121 is the Response regulatory domain. Position 54 is a 4-aspartylphosphate (D54). Residues L143–I368 enclose the Sigma-54 factor interaction domain. ATP is bound by residues G171–E178 and A231–E240.

Functionally, member of the two-component regulatory system RC0849/RC0948. This Rickettsia conorii (strain ATCC VR-613 / Malish 7) protein is Putative response regulator NtrX-like.